The sequence spans 1596 residues: Cellulose synthase 2 (1596 aa).

Residues 1–749 (MIYRAILKRL…RSARHGATAS (749 aa)) form a catalytic region. 2 helical membrane-spanning segments follow: residues 25-45 (SPFVMMAVGVFLMLMAGGVTI) and 106-126 (LSLLLVAAELYALLTLCLSYF). Residues 145 to 238 (DWPVVDVYVP…YVVIFDCDHI (94 aa)) are catalytic subdomain A. Asp187 is an active-site residue. Positions 234 and 236 each coordinate substrate. Residues 315 to 375 (SAVLGIGGFA…GQRVRWARGM (61 aa)) form a catalytic subdomain B region. Residue Asp331 is part of the active site. Transmembrane regions (helical) follow at residues 396 to 416 (LCYLSAMSHFLFAIPRLVFLA), 421 to 441 (FLFLGQNIIAASPFAILVYAF), 505 to 525 (FDLNAVYPNVILAVILALALV), and 544 to 564 (FALNTLWVAVSLIIVLASIAV). One can recognise a PilZ domain in the interval 570-669 (QIRHKPRVRA…ERQIVEFMFG (100 aa)). The tract at residues 750–1596 (LIVLLGLPAA…RVKDTTDASH (847 aa)) is cyclic di-GMP binding domain. 2 disordered regions span residues 769–812 (SRAT…IAPA) and 828–868 (TGPA…APPI). Positions 783–809 (VEPPPVNAPPPPSLPQPPGTLPTPPQI) are enriched in pro residues. A helical transmembrane segment spans residues 1553–1573 (LTLYVLGLVGAGLVAAAAVRL).

The protein in the N-terminal section; belongs to the glycosyltransferase 2 family. This sequence in the C-terminal section; belongs to the AcsB/BcsB family.

The protein resides in the cell inner membrane. It catalyses the reaction [(1-&gt;4)-beta-D-glucosyl](n) + UDP-alpha-D-glucose = [(1-&gt;4)-beta-D-glucosyl](n+1) + UDP + H(+). This is Cellulose synthase 2 (acsAII) from Novacetimonas hansenii (Komagataeibacter hansenii).